The chain runs to 300 residues: Glutamyl-Q tRNA(Asp) synthetase (300 aa).

L-glutamate contacts are provided by residues 8–12 (RFAPS) and glutamate 44. The 'HIGH' region signature appears at 11-21 (PSPTGALHAGS). Residues cysteine 100, cysteine 102, tyrosine 126, and cysteine 130 each coordinate Zn(2+). The L-glutamate site is built by tyrosine 190 and arginine 208. A 'KMSKS' region motif is present at residues 246–250 (KLSKQ). Residue lysine 249 participates in ATP binding.

This sequence belongs to the class-I aminoacyl-tRNA synthetase family. GluQ subfamily. The cofactor is Zn(2+).

Its function is as follows. Catalyzes the tRNA-independent activation of glutamate in presence of ATP and the subsequent transfer of glutamate onto a tRNA(Asp). Glutamate is transferred on the 2-amino-5-(4,5-dihydroxy-2-cyclopenten-1-yl) moiety of the queuosine in the wobble position of the QUC anticodon. This chain is Glutamyl-Q tRNA(Asp) synthetase, found in Leptothrix cholodnii (strain ATCC 51168 / LMG 8142 / SP-6) (Leptothrix discophora (strain SP-6)).